The chain runs to 181 residues: Adenylate kinase (181 aa).

An ATP-binding site is contributed by 10-15 (GAGKGT). Positions 30–59 (STGDLFRANIGEGTPLGIEAKQYIDAGKLV) are NMP. Residues Thr-31, Arg-36, 57–59 (KLV), 85–88 (GFPR), and Gln-92 each bind AMP. The LID stretch occupies residues 126 to 132 (SRGRADD). Arg-127 contributes to the ATP binding site. AMP contacts are provided by Arg-129 and Arg-140. An ATP-binding site is contributed by Gly-166.

This sequence belongs to the adenylate kinase family. As to quaternary structure, monomer.

The protein resides in the cytoplasm. The enzyme catalyses AMP + ATP = 2 ADP. The protein operates within purine metabolism; AMP biosynthesis via salvage pathway; AMP from ADP: step 1/1. Its function is as follows. Catalyzes the reversible transfer of the terminal phosphate group between ATP and AMP. Plays an important role in cellular energy homeostasis and in adenine nucleotide metabolism. The sequence is that of Adenylate kinase from Corynebacterium glutamicum (strain R).